An 80-amino-acid polypeptide reads, in one-letter code: Histone H1.M6.1 (80 aa).

The tract at residues 1-80 is disordered; the sequence is MSDAAVPPKK…KAVKKAPKKK (80 aa). Over residues 11–80 the composition is skewed to basic residues; it reads ASPKKAAAKK…KAVKKAPKKK (70 aa).

It localises to the nucleus. Its subcellular location is the chromosome. In Trypanosoma cruzi, this protein is Histone H1.M6.1.